Here is a 270-residue protein sequence, read N- to C-terminus: Tetraspanin-17 (270 aa).

At 1–19 (MPGKHQQFQDPEVGCCGKY) the chain is on the cytoplasmic side. A helical membrane pass occupies residues 20 to 40 (FLFGFNIVFWVLGALFLAIGL). At 41 to 63 (WAWGEKGVLSNISGLTDLGGLDP) the chain is on the extracellular side. N-linked (GlcNAc...) asparagine glycosylation is present at asparagine 51. Residues 64–84 (VWLFVVIGGIMSVLGFAGCIG) traverse the membrane as a helical segment. At 85 to 94 (ALRENTFLLK) the chain is on the cytoplasmic side. Residues 95–115 (FFSVFLGLIFFLELAAGILAF) traverse the membrane as a helical segment. The Extracellular portion of the chain corresponds to 116-234 (VFKDWIRDQL…GQFEKWLQDN (119 aa)). 4 disulfide bridges follow: cysteine 155-cysteine 223, cysteine 156-cysteine 188, cysteine 172-cysteine 182, and cysteine 189-cysteine 202. Asparagine 171 is a glycosylation site (N-linked (GlcNAc...) asparagine). Residues 235-255 (LIVVAGVLVAIALLQICGICL) form a helical membrane-spanning segment. Topologically, residues 256 to 270 (AQNLVSDIEAVKANW) are cytoplasmic.

The protein belongs to the tetraspanin (TM4SF) family. In terms of assembly, interacts with ADAM10; the interaction influences ADAM10 substrate specificity, endocytosis and turnover.

It localises to the cell membrane. In terms of biological role, part of TspanC8 subgroup, composed of 6 members that interact with the transmembrane metalloprotease ADAM10. This interaction is required for ADAM10 exit from the endoplasmic reticulum and for enzymatic maturation and trafficking to the cell surface as well as substrate specificity. Different TspanC8/ADAM10 complexes have distinct substrates. Seems to regulate VE-cadherin expression in endothelial cells probably through interaction with ADAM10, promoting leukocyte transmigration. This Rattus norvegicus (Rat) protein is Tetraspanin-17 (Tspan17).